A 146-amino-acid polypeptide reads, in one-letter code: Stress enhanced protein 1, chloroplastic (146 aa).

The N-terminal 73 residues, methionine 1–arginine 73, are a transit peptide targeting the chloroplast. 2 consecutive transmembrane segments (helical) span residues leucine 84 to isoleucine 104 and leucine 120 to phenylalanine 140.

This sequence belongs to the ELIP/psbS family.

It is found in the plastid. It localises to the chloroplast thylakoid membrane. In terms of biological role, may be involved in non-photochemical quenching, a process that maintains the balance between dissipation and utilization of light energy to minimize generation of oxidizing molecules, thereby protecting the plant against photo-oxidative damage. May play a photoprotective role in the thylakoid membrane in response to light stress. This Arabidopsis thaliana (Mouse-ear cress) protein is Stress enhanced protein 1, chloroplastic.